The sequence spans 536 residues: Chaperonin GroEL 2 (536 aa).

ATP is bound by residues 29–32 (TLGP), 86–90 (DGTTT), Gly412, and Asp495.

This sequence belongs to the chaperonin (HSP60) family. As to quaternary structure, forms a cylinder of 14 subunits composed of two heptameric rings stacked back-to-back. Interacts with the co-chaperonin GroES.

The protein localises to the cytoplasm. It catalyses the reaction ATP + H2O + a folded polypeptide = ADP + phosphate + an unfolded polypeptide.. Together with its co-chaperonin GroES, plays an essential role in assisting protein folding. The GroEL-GroES system forms a nano-cage that allows encapsulation of the non-native substrate proteins and provides a physical environment optimized to promote and accelerate protein folding. The protein is Chaperonin GroEL 2 of Arthrobacter sp. (strain FB24).